Here is a 1233-residue protein sequence, read N- to C-terminus: Structural maintenance of chromosomes protein 1A (1233 aa).

ATP is bound at residue 32–39 (GPNGSGKS). Coiled-coil stretches lie at residues 104-124 (EYKINNKVVQLHEYSEELEKL) and 163-503 (ELAQ…KAEI). Residues 284–293 (IKEKDSELNQ) show a composition bias toward basic and acidic residues. 2 disordered regions span residues 284-308 (IKEKDSELNQKRPQYIKAKENTSHK) and 348-369 (QEFEERMEEESQSQGRDLTLEE). Phosphoserine is present on residues S358 and S360. Residues 515-629 (VYGRLIDLCQ…DNVEDARRIA (115 aa)) enclose the SMC hinge domain. K648 and K713 each carry N6-acetyllysine. Residues 667–935 (DEKAVDKLKE…RHNLLQACKM (269 aa)) adopt a coiled-coil conformation. Residues 947–969 (MDDISQEEGSSQGEESVSGSQRT) are disordered. Residues 953 to 967 (EEGSSQGEESVSGSQ) show a composition bias toward low complexity. A phosphoserine mark is found at S957, S962, S966, and S970. Positions 988-1068 (EDLKDAQAEE…FEQIKKERFD (81 aa)) form a coiled coil. Residue K1037 is modified to N6-acetyllysine.

This sequence belongs to the SMC family. SMC1 subfamily. In terms of assembly, forms a heterodimer with SMC3 in cohesin complexes. Cohesin complexes are composed of the SMC1 (SMC1A or SMC1B) and SMC3 heterodimer attached via their SMC hinge domain, RAD21 which link them, and one STAG protein (STAG1, STAG2 or STAG3), which interacts with RAD21. In germ cell cohesin complexes, SMC1A is mutually exclusive with SMC1B. Interacts with STAG3. Found in a complex with CDCA5, SMC3 and RAD21, PDS5A/SCC-112 and PDS5B/APRIN. Found in a complex containing POLE and SMC3. Interacts with BRCA1, SYCP2, NDC80, RPGR and BRAT1. The cohesin complex interacts with the cohesin loading complex subunits NIPBL/Scc2 (via HEAT repeats) and MAU2/Scc4. NIPBL directly contacts all members of the complex, RAD21, SMC1A/B, SMC3 and STAG1. Phosphorylated upon ionizing radiation or DNA methylation. Phosphorylation of Ser-957 and Ser-966 activates it and is required for S-phase checkpoint activation. In terms of processing, ubiquitinated by the DCX(DCAF15) complex, leading to its degradation. As to expression, ubiquitous (at protein level).

The protein resides in the nucleus. It localises to the chromosome. It is found in the centromere. Involved in chromosome cohesion during cell cycle and in DNA repair. Involved in DNA repair via its interaction with BRCA1 and its related phosphorylation by ATM, and works as a downstream effector in the ATM/NBS1 branch of S-phase checkpoint. Central component of cohesin complex. The cohesin complex is required for the cohesion of sister chromatids after DNA replication. The cohesin complex apparently forms a large proteinaceous ring within which sister chromatids can be trapped. At anaphase, the complex is cleaved and dissociates from chromatin, allowing sister chromatids to segregate. The cohesin complex may also play a role in spindle pole assembly during mitosis. Involved in DNA repair via its interaction with BRCA1 and its related phosphorylation by ATM, or via its phosphorylation by ATR. Works as a downstream effector both in the ATM/NBS1 branch and in the ATR/MSH2 branch of S-phase checkpoint. The chain is Structural maintenance of chromosomes protein 1A (Smc1a) from Mus musculus (Mouse).